The following is a 227-amino-acid chain: MKFPLLLALLVGGAFALHLSSEASDSKSPLVDESLPREAEISRPEVEESPPGEQLMSLEEEEEEEEEEGSGSEGALGNEGAVSGQDVTDENLQSPKEEDTTSLMGDSGFKTGRYLLVRRPECFNKAQLVCRSCYRGTLASIHSFSVNFRIQSFVRGINQGQVWIGGRIVGWGRCKRFRWIDGSSWNFAYWAAGQPRRGGGRCVTLCTRGGHWRRSGCGKRRPFICAY.

Residues Met1 to Ala16 form the signal peptide. The propeptide at Leu17–Lys110 is acidic. A disordered region spans residues Ser21–Gly105. A glycan (O-linked (GalNAc...) serine) is linked at Ser24. Positions Ser34–Val46 are enriched in basic and acidic residues. Acidic residues predominate over residues Leu58 to Ser70. Residue Ser70 is glycosylated (O-linked (Xyl...) (chondroitin sulfate) serine). One can recognise a C-type lectin domain in the interval Leu128–Tyr227. 2 disulfide bridges follow: Cys130-Cys225 and Cys202-Cys217.

Nitrated.

The protein localises to the secreted. Its function is as follows. Cytotoxin and helminthotoxin. MBP also induces non-cytolytic histamine release from basophils. It is involved in antiparasitic defense mechanisms and immune hypersensitivity reactions. The chain is Bone marrow proteoglycan (Prg2) from Rattus norvegicus (Rat).